The following is a 321-amino-acid chain: Isoaspartyl peptidase (321 aa).

The Nucleophile role is filled by T179. Residues 207-210 (RVGD) and 230-233 (TGTG) each bind substrate.

It belongs to the Ntn-hydrolase family. As to quaternary structure, heterotetramer of two alpha and two beta chains arranged as a dimer of alpha/beta heterodimers. Autocleaved. Generates the alpha and beta subunits. The N-terminal residue of the beta subunit is thought to be responsible for the nucleophile hydrolase activity. Post-translationally, both subunits undergo further processing at their C-termini. The overexpressed alpha subunit seems to consist of residues 2-161, with an oxidized Met residue and a tightly coordinated Na(+), whereas the overexpressed beta subunit is processed to residue 315 and has 3 oxidized Met residues. Processing of the alpha subunit is inhibited by Zn(2+).

It catalyses the reaction Cleavage of a beta-linked Asp residue from the N-terminus of a polypeptide.. Degrades proteins damaged by L-isoaspartyl residue formation (also known as beta-Asp residues). Degrades L-isoaspartyl-containing di- and maybe also tripeptides. Also has L-asparaginase activity, although this may not be its principal function. Functionally, may be involved in glutathione, and possibly other peptide, transport, although these results could also be due to polar effects of disruption. In Escherichia coli (strain K12), this protein is Isoaspartyl peptidase (iaaA).